The chain runs to 236 residues: Biosynthetic peptidoglycan transglycosylase (236 aa).

A helical transmembrane segment spans residues 20–40; that stretch reads LVFIVLSVLILPYALIGLYLL.

The protein belongs to the glycosyltransferase 51 family.

It is found in the cell inner membrane. It carries out the reaction [GlcNAc-(1-&gt;4)-Mur2Ac(oyl-L-Ala-gamma-D-Glu-L-Lys-D-Ala-D-Ala)](n)-di-trans,octa-cis-undecaprenyl diphosphate + beta-D-GlcNAc-(1-&gt;4)-Mur2Ac(oyl-L-Ala-gamma-D-Glu-L-Lys-D-Ala-D-Ala)-di-trans,octa-cis-undecaprenyl diphosphate = [GlcNAc-(1-&gt;4)-Mur2Ac(oyl-L-Ala-gamma-D-Glu-L-Lys-D-Ala-D-Ala)](n+1)-di-trans,octa-cis-undecaprenyl diphosphate + di-trans,octa-cis-undecaprenyl diphosphate + H(+). It participates in cell wall biogenesis; peptidoglycan biosynthesis. Functionally, peptidoglycan polymerase that catalyzes glycan chain elongation from lipid-linked precursors. This is Biosynthetic peptidoglycan transglycosylase from Rhizobium meliloti (strain 1021) (Ensifer meliloti).